Consider the following 543-residue polypeptide: Sensor histidine kinase DcuS (543 aa).

Residues 1 to 20 (MRHSLPYHILRKRPMKLSTT) are Cytoplasmic-facing. A helical membrane pass occupies residues 21–41 (VILMVSAVLFSVLLVVHLIYF). At 42–181 (SQISDMTRDG…VTQQINDSRW (140 aa)) the chain is on the periplasmic side. (R)-malate is bound by residues 107-110 (RYSH), lysine 121, 140-142 (GFL), and arginine 147. The helical transmembrane segment at 182 to 202 (SIIWSVLFGMLVGLIGTCILV) threads the bilayer. The Cytoplasmic portion of the chain corresponds to 203–543 (KVLKKILFGL…IPWDGERSNR (341 aa)). In terms of domain architecture, PAS spans 212-323 (LEPYEISTLF…IIGAISTFRD (112 aa)). Positions 346–538 (ERSHEFMNKL…QFFVQIPWDG (193 aa)) constitute a Histidine kinase domain. The residue at position 349 (histidine 349) is a Phosphohistidine; by autocatalysis.

In terms of assembly, homodimer. Autophosphorylated. The phosphoryl group is rapidly transferred to DcuR.

It is found in the cell inner membrane. The catalysed reaction is ATP + protein L-histidine = ADP + protein N-phospho-L-histidine.. Functionally, member of the two-component regulatory system DcuR/DcuS. Involved in the C4-dicarboxylate-stimulated regulation of the genes encoding the anaerobic fumarate respiratory system (frdABCD; nuoAN; dcuB; sdhCDAB; etc.). Weakly regulates the aerobic C4-dicarboxylate transporter dctA. Activates DcuR by phosphorylation. The polypeptide is Sensor histidine kinase DcuS (dcuS) (Shigella flexneri).